The following is a 1796-amino-acid chain: U3 small nucleolar RNA-associated protein 10 (1796 aa).

12 HEAT repeats span residues 586–623 (LDLQAMIPYCVAALSDPAKKVRQAAADLITVLSKSNAE), 656–692 (LLQEIIVPALEESVLDEEHISNVLRSHLQSTKDSATG), 861–898 (DLTTNILNAFLESLQDIPKITTDSPATKRRRTSSSDHS), 983–1021 (DTSVGHGDVLVQCIQKSSSPAVQNSALLLVASLANTAPD), 1052–1089 (QTIKEVIPPLVETFRKSRRNLVTSAAELLSSFVIAYEH), 1161–1198 (QPKPTLAATLFNRNTDDDQDLHKTALKELTLLPKVLSS), 1258–1295 (LSIGEFIKAVENLLDRPSISLRQKVLRTLEVRVDQESN), 1302–1340 (TVLLAFLPQLTAVIRDSDDIAYKHTAVACVDKIAEKYGK), 1344–1383 (EAVAAAATTIAGDCCLGQPDKRLRVMALLCLASLVDVLQD), 1492–1529 (SAVEEYLKLLATVLDKHPSTIIAKHISTLSTIFLSALD), 1711–1748 (DHRKELNAAVLRRLRSPSASVRLAAVRCEQSLTDTLGE), and 1752–1789 (EMLSEMLPYISELQDDDDEDVEKETHRWITKIEAILGE). Positions 881–901 (TTDSPATKRRRTSSSDHSRGV) are disordered.

Belongs to the HEATR1/UTP10 family. In terms of assembly, component of the ribosomal small subunit (SSU) processome.

The protein resides in the nucleus. It localises to the nucleolus. In terms of biological role, involved in nucleolar processing of pre-18S ribosomal RNA. Involved in ribosome biosynthesis. The protein is U3 small nucleolar RNA-associated protein 10 of Pyricularia oryzae (strain 70-15 / ATCC MYA-4617 / FGSC 8958) (Rice blast fungus).